We begin with the raw amino-acid sequence, 139 residues long: Single-stranded DNA-binding protein 2 (139 aa).

One can recognise an SSB domain in the interval 1 to 104 (MLNRTVLVGR…VVADSVQFLE (104 aa)). Residues 103–139 (LEPKNNNKQNNQQHNGQTQTGNNPFDNTEEDFSDLPF) are disordered. Residues 106–125 (KNNNKQNNQQHNGQTQTGNN) are compositionally biased toward low complexity. A compositionally biased stretch (acidic residues) spans 129-139 (NTEEDFSDLPF).

As to quaternary structure, homotetramer.

This Staphylococcus aureus (strain COL) protein is Single-stranded DNA-binding protein 2 (ssb-p).